Reading from the N-terminus, the 571-residue chain is Hsp70-Hsp90 organizing protein 2 (571 aa).

3 TPR repeats span residues A2–N35, V37–W69, and G70–N103. Positions A117–M137 are disordered. In terms of domain architecture, STI1 1 spans G134–Y173. A Phosphoserine modification is found at S168. Positions D198–M207 are enriched in acidic residues. Positions D198–K245 are disordered. 2 stretches are compositionally biased toward basic and acidic residues: residues S211–P225 and G234–K245. A Bipartite nuclear localization signal motif is present at residues K240–K257. 6 TPR repeats span residues A243–D276, S278–L310, T322–P355, G382–D415, R417–F449, and L450–N483. The STI1 2 domain occupies D520–I559.

In terms of assembly, co-chaperone that forms a complex with HSP70 and HSP90 and preproteins (e.g. chloroplast preproteins). In terms of processing, phosphorylated. Post-translationally, acetylated.

It is found in the cytoplasm. Its subcellular location is the nucleus. Its function is as follows. Mediates the association of the molecular chaperones HSP70 and HSP90. Mediates nuclear encoded chloroplast preproteins binding to HSP90 prior to chloroplastic sorting. The sequence is that of Hsp70-Hsp90 organizing protein 2 (HOP2) from Arabidopsis thaliana (Mouse-ear cress).